We begin with the raw amino-acid sequence, 503 residues long: Maturase K (503 aa).

This sequence belongs to the intron maturase 2 family. MatK subfamily.

It localises to the plastid. The protein resides in the chloroplast. Functionally, usually encoded in the trnK tRNA gene intron. Probably assists in splicing its own and other chloroplast group II introns. This chain is Maturase K, found in Diospyros kaki (Kaki persimmon).